A 116-amino-acid chain; its full sequence is Protein Rev (116 aa).

Ser5 is modified (phosphoserine; by host CK2). The homomultimerization stretch occupies residues 18–26 (IIRLLYQSN). Residues 27-49 (PYPEPAGTRQAQRNRRRRWRARQ) are disordered. The short motif at 34–50 (TRQAQRNRRRRWRARQR) is the Nuclear localization signal and RNA-binding (RRE) element. Residues 38–49 (QRNRRRRWRARQ) show a composition bias toward basic residues. The short motif at 73-84 (LQLPPLERLTLD) is the Nuclear export signal and binding to XPO1 element. Residues 86-116 (SEDCGTSGEKGVGSPQTSGESPAVLGTGAKE) are disordered. Phosphoserine; by host occurs at positions 92 and 99.

This sequence belongs to the HIV-1 REV protein family. In terms of assembly, homomultimer; when bound to the RRE. Multimeric assembly is essential for activity and may involve XPO1. Binds to human KPNB1, XPO1, TNPO1, RANBP5 and IPO7. Interacts with the viral Integrase. Interacts with human KHDRBS1. Interacts with human NAP1; this interaction decreases Rev multimerization and stimulates its activity. Interacts with human DEAD-box helicases DDX3 and DDX24; these interactions may serve for viral RNA export to the cytoplasm and packaging, respectively. Interacts with human PSIP1; this interaction may inhibit HIV-1 DNA integration by promoting dissociation of the Integrase-LEDGF/p75 complex. Post-translationally, asymmetrically arginine dimethylated at one site by host PRMT6. Methylation impairs the RNA-binding activity and export of viral RNA from the nucleus to the cytoplasm. Phosphorylated by protein kinase CK2. Presence of, and maybe binding to the N-terminus of the regulatory beta subunit of CK2 is necessary for CK2-mediated Rev's phosphorylation.

It is found in the host nucleus. The protein resides in the host nucleolus. Its subcellular location is the host cytoplasm. Functionally, escorts unspliced or incompletely spliced viral pre-mRNAs (late transcripts) out of the nucleus of infected cells. These pre-mRNAs carry a recognition sequence called Rev responsive element (RRE) located in the env gene, that is not present in fully spliced viral mRNAs (early transcripts). This function is essential since most viral proteins are translated from unspliced or partially spliced pre-mRNAs which cannot exit the nucleus by the pathway used by fully processed cellular mRNAs. Rev itself is translated from a fully spliced mRNA that readily exits the nucleus. Rev's nuclear localization signal (NLS) binds directly to KPNB1/Importin beta-1 without previous binding to KPNA1/Importin alpha-1. KPNB1 binds to the GDP bound form of RAN (Ran-GDP) and targets Rev to the nucleus. In the nucleus, the conversion from Ran-GDP to Ran-GTP dissociates Rev from KPNB1 and allows Rev's binding to the RRE in viral pre-mRNAs. Rev multimerization on the RRE via cooperative assembly exposes its nuclear export signal (NES) to the surface. Rev can then form a complex with XPO1/CRM1 and Ran-GTP, leading to nuclear export of the complex. Conversion from Ran-GTP to Ran-GDP mediates dissociation of the Rev/RRE/XPO1/RAN complex, so that Rev can return to the nucleus for a subsequent round of export. Beside KPNB1, also seems to interact with TNPO1/Transportin-1, RANBP5/IPO5 and IPO7/RANBP7 for nuclear import. The nucleoporin-like HRB/RIP is an essential cofactor that probably indirectly interacts with Rev to release HIV RNAs from the perinuclear region to the cytoplasm. The chain is Protein Rev from Human immunodeficiency virus type 1 group M subtype H (isolate VI991) (HIV-1).